Consider the following 644-residue polypeptide: Heat shock protein SSC3, mitochondrial (644 aa).

The protein belongs to the heat shock protein 70 family.

The protein resides in the mitochondrion matrix. It is found in the mitochondrion nucleoid. Functionally, plays a role in facilitating the assembly of some protein complexes inside the mitochondria. It may initiate the events that lead to refolding of imported precursors in the matrix space. In Saccharomyces cerevisiae (strain ATCC 204508 / S288c) (Baker's yeast), this protein is Heat shock protein SSC3, mitochondrial (ECM10).